A 235-amino-acid chain; its full sequence is Flagellar L-ring protein (235 aa).

The signal sequence occupies residues 1–18 (MNKIAGTLFLLAGLAMAG). Cysteine 19 is lipidated: N-palmitoyl cysteine. The S-diacylglycerol cysteine moiety is linked to residue cysteine 19.

Belongs to the FlgH family. As to quaternary structure, the basal body constitutes a major portion of the flagellar organelle and consists of four rings (L,P,S, and M) mounted on a central rod.

It is found in the cell outer membrane. The protein resides in the bacterial flagellum basal body. Its function is as follows. Assembles around the rod to form the L-ring and probably protects the motor/basal body from shearing forces during rotation. In Chelativorans sp. (strain BNC1), this protein is Flagellar L-ring protein.